We begin with the raw amino-acid sequence, 616 residues long: UvrABC system protein C (616 aa).

Residues 12–97 (NDAGVYQYFD…IKQLKPKYNI (86 aa)) enclose the GIY-YIG domain. The UVR domain maps to 203–238 (TKLISKLNEKMLQYSNDFRFEEAMTLRDRIKTIEKS).

The protein belongs to the UvrC family. Interacts with UvrB in an incision complex.

The protein localises to the cytoplasm. In terms of biological role, the UvrABC repair system catalyzes the recognition and processing of DNA lesions. UvrC both incises the 5' and 3' sides of the lesion. The N-terminal half is responsible for the 3' incision and the C-terminal half is responsible for the 5' incision. In Aliarcobacter butzleri (strain RM4018) (Arcobacter butzleri), this protein is UvrABC system protein C.